A 451-amino-acid chain; its full sequence is UDP-glycosyltransferase 76E11 (451 aa).

UDP-alpha-D-glucose is bound by residues S273, 332-334 (APQ), 349-357 (HCGWNSTLE), and 371-374 (SSDQ).

This sequence belongs to the UDP-glycosyltransferase family.

Its function is as follows. Possesses low quercetin 3-O-glucosyltransferase and 7-O-glucosyltransferase activities in vitro. In Arabidopsis thaliana (Mouse-ear cress), this protein is UDP-glycosyltransferase 76E11 (UGT76E11).